We begin with the raw amino-acid sequence, 105 residues long: Putative neurotoxin 10 (105 aa).

The signal sequence occupies residues 1–21 (MTVSCSKVLLSLCLFLILLEA).

The protein belongs to the scolopendra neurotoxin 10 family. In terms of processing, contains 3 disulfide bonds. As to expression, expressed by the venom gland.

The protein localises to the secreted. This chain is Putative neurotoxin 10, found in Scolopendra mutilans (Chinese red-headed centipede).